We begin with the raw amino-acid sequence, 141 residues long: Pheromone-binding protein-related protein 6 (141 aa).

The signal sequence occupies residues 1 to 16 (MVKYPLILLLIGCAAA). 3 disulfides stabilise this stretch: Cys-41/Cys-72, Cys-68/Cys-120, and Cys-111/Cys-129.

Belongs to the PBP/GOBP family. In terms of tissue distribution, antenna. Mostly expressed in two types of sensory hairs, sensilla trichodea and small sensilla basiconica, in the ventro-lateral region of the third antennal segment (at protein level).

It is found in the secreted. In Drosophila melanogaster (Fruit fly), this protein is Pheromone-binding protein-related protein 6 (Obp83b).